A 101-amino-acid polypeptide reads, in one-letter code: Large ribosomal subunit protein uL23 (101 aa).

This sequence belongs to the universal ribosomal protein uL23 family. As to quaternary structure, part of the 50S ribosomal subunit. Contacts protein L29, and trigger factor when it is bound to the ribosome.

Its function is as follows. One of the early assembly proteins it binds 23S rRNA. One of the proteins that surrounds the polypeptide exit tunnel on the outside of the ribosome. Forms the main docking site for trigger factor binding to the ribosome. In Trichodesmium erythraeum (strain IMS101), this protein is Large ribosomal subunit protein uL23.